The sequence spans 383 residues: GA-binding protein subunit beta-1 (383 aa).

Ser2 carries the post-translational modification N-acetylserine. ANK repeat units follow at residues 5-34 and 37-66; these read DLGKKLLEAARAGQDDEVRILMANGAPFTT and LGTSPLHLAAQYGHYSTTEVLLRAGVSRDA. The residue at position 69 (Lys69) is an N6-acetyllysine. 3 ANK repeats span residues 70 to 99, 103 to 132, and 136 to 166; these read VDRTPLHMAASEGHASIVEVLLKHGADVNA, LKMTALHWATEHNHQEVVELLIKYGADVHT, and FCKTAFDISIDNGNEDLAEILQIAMQNQINT. N6-acetyllysine occurs at positions 340 and 369.

Heterotetramer of two alpha and two beta subunits. Interacts with HCFC1, causing repression of transcriptional activity. In terms of processing, acetylated by EP300/p300. Deacetylated by SIRT7, promoting heterotetramerization and activity.

It localises to the nucleus. Functionally, transcription factor capable of interacting with purine rich repeats (GA repeats). Acts as a master regulator of nuclear-encoded mitochondrial genes. The polypeptide is GA-binding protein subunit beta-1 (GABPB1) (Bos taurus (Bovine)).